The chain runs to 609 residues: Granule-bound starch synthase 1, chloroplastic/amyloplastic (609 aa).

The transit peptide at 1–77 directs the protein to the chloroplast; the sequence is MSALTTSQLA…SRRFPSVVVY (77 aa). The segment at 29–67 is disordered; sequence RHGFQGLKPRSPAGGDATSLSVTTSARATPKQQRSVQRG. A compositionally biased stretch (polar residues) spans 46–66; that stretch reads TSLSVTTSARATPKQQRSVQR. Residue lysine 97 coordinates ADP-alpha-D-glucose.

This sequence belongs to the glycosyltransferase 1 family. Bacterial/plant glycogen synthase subfamily.

Its subcellular location is the plastid. It localises to the chloroplast. The protein resides in the amyloplast. The enzyme catalyses an NDP-alpha-D-glucose + [(1-&gt;4)-alpha-D-glucosyl](n) = [(1-&gt;4)-alpha-D-glucosyl](n+1) + a ribonucleoside 5'-diphosphate + H(+). It participates in glycan biosynthesis; starch biosynthesis. In terms of biological role, required for the synthesis of amylose in endosperm. This chain is Granule-bound starch synthase 1, chloroplastic/amyloplastic (WAXY), found in Oryza glaberrima (African rice).